The chain runs to 554 residues: Phenylalanine--tRNA ligase beta subunit (554 aa).

The B5 domain maps to 276-351; that stretch reads LTLKSRIISI…INYGYEKFEG (76 aa). Residues aspartate 329, aspartate 335, glutamate 338, and glutamate 339 each contribute to the Mg(2+) site.

It belongs to the phenylalanyl-tRNA synthetase beta subunit family. Type 2 subfamily. In terms of assembly, tetramer of two alpha and two beta subunits. Mg(2+) is required as a cofactor.

It is found in the cytoplasm. The catalysed reaction is tRNA(Phe) + L-phenylalanine + ATP = L-phenylalanyl-tRNA(Phe) + AMP + diphosphate + H(+). This Methanococcus maripaludis (strain C7 / ATCC BAA-1331) protein is Phenylalanine--tRNA ligase beta subunit.